A 144-amino-acid polypeptide reads, in one-letter code: Fluoride-specific ion channel FluC (144 aa).

4 helical membrane-spanning segments follow: residues 7-27 (LIVMVGGALGTLARYLVSVAA), 33-53 (FIPWGTILPINALGSFVIGFF), 71-91 (LFVMIGLCGGYTTFSSFSLQT), and 105-125 (VNVAASVILCIGAVALGHITA). 2 residues coordinate Na(+): Gly-79 and Thr-82.

This sequence belongs to the fluoride channel Fluc/FEX (TC 1.A.43) family.

Its subcellular location is the cell inner membrane. It catalyses the reaction fluoride(in) = fluoride(out). Its activity is regulated as follows. Na(+) is not transported, but it plays an essential structural role and its presence is essential for fluoride channel function. Functionally, fluoride-specific ion channel. Important for reducing fluoride concentration in the cell, thus reducing its toxicity. The sequence is that of Fluoride-specific ion channel FluC from Gluconobacter oxydans (strain 621H) (Gluconobacter suboxydans).